The primary structure comprises 466 residues: Clusterin-like protein 1 (466 aa).

Positions 1–20 (MKPPLLVFIVCLLWLKDSHC) are cleaved as a signal peptide. Positions 57–111 (KQMKIMMERKEKEHTNLMSTLKKCREEKQEALKLLNEVQEHLEEEERLCRESLAD) form a coiled coil. Disulfide bonds link Cys-105–Cys-333, Cys-116–Cys-325, Cys-119–Cys-322, Cys-124–Cys-315, and Cys-131–Cys-305. Asn-196, Asn-257, Asn-311, Asn-351, Asn-412, and Asn-431 each carry an N-linked (GlcNAc...) asparagine glycan.

Belongs to the clusterin family.

The protein resides in the secreted. This Homo sapiens (Human) protein is Clusterin-like protein 1 (CLUL1).